The chain runs to 396 residues: Phosphoglycerate kinase (396 aa).

Substrate-binding positions include 21–23, arginine 36, 59–62, arginine 119, and arginine 156; these read DFN and HLGR. ATP is bound by residues lysine 207, glutamate 325, and 352–355; that span reads GGDS.

The protein belongs to the phosphoglycerate kinase family. Monomer.

The protein resides in the cytoplasm. The enzyme catalyses (2R)-3-phosphoglycerate + ATP = (2R)-3-phospho-glyceroyl phosphate + ADP. The protein operates within carbohydrate degradation; glycolysis; pyruvate from D-glyceraldehyde 3-phosphate: step 2/5. The chain is Phosphoglycerate kinase from Lacticaseibacillus casei (strain BL23) (Lactobacillus casei).